A 144-amino-acid polypeptide reads, in one-letter code: NADH dehydrogenase [ubiquinone] 1 alpha subcomplex subunit 13 (144 aa).

Ala-2 is subject to N-acetylalanine. The helical transmembrane segment at 30–51 (LSGYSMLAIGIGTLIYGHWSIM) threads the bilayer. Residues 102 to 144 (PDWKVGESVFHTTRWVPPLIGELYGLRTTEEALHASHGFMWYT) are important for inducing cell death.

Belongs to the complex I NDUFA13 subunit family. In terms of assembly, complex I is composed of 45 different subunits. Interacts with CARD15, but not with CARD4. Interacts with STAT3, but not with STAT1, STAT2 and STAT5A. Interacts with OLFM4. As to quaternary structure, (Microbial infection) Interacts with HHV-8 IRF1, in the nucleus, with HPV-16 E6 and SV40 LT. Widely expressed, with highest expression in heart, skeletal muscle, liver, kidney and placenta. In intestinal mucosa, down-regulated in areas involved in Crohn disease and ulcerative colitis.

The protein localises to the mitochondrion inner membrane. Its subcellular location is the nucleus. Accessory subunit of the mitochondrial membrane respiratory chain NADH dehydrogenase (Complex I), that is believed not to be involved in catalysis. Complex I functions in the transfer of electrons from NADH to the respiratory chain. The immediate electron acceptor for the enzyme is believed to be ubiquinone. Involved in the interferon/all-trans-retinoic acid (IFN/RA) induced cell death. This apoptotic activity is inhibited by interaction with viral IRF1. Prevents the transactivation of STAT3 target genes. May play a role in CARD15-mediated innate mucosal responses and serve to regulate intestinal epithelial cell responses to microbes. The polypeptide is NADH dehydrogenase [ubiquinone] 1 alpha subcomplex subunit 13 (NDUFA13) (Homo sapiens (Human)).